We begin with the raw amino-acid sequence, 198 residues long: tRNA (pseudouridine(54)-N(1))-methyltransferase (198 aa).

Residues Leu130, Gly153, 176–181 (LSPLEL), and Cys186 each bind S-adenosyl-L-methionine.

This sequence belongs to the methyltransferase superfamily. TrmY family. In terms of assembly, homodimer.

It is found in the cytoplasm. The enzyme catalyses pseudouridine(54) in tRNA + S-adenosyl-L-methionine = N(1)-methylpseudouridine(54) in tRNA + S-adenosyl-L-homocysteine + H(+). In terms of biological role, specifically catalyzes the N1-methylation of pseudouridine at position 54 (Psi54) in tRNAs. The polypeptide is tRNA (pseudouridine(54)-N(1))-methyltransferase (Methanococcus maripaludis (strain C7 / ATCC BAA-1331)).